Consider the following 292-residue polypeptide: ATP synthase gamma chain (292 aa).

This sequence belongs to the ATPase gamma chain family. F-type ATPases have 2 components, CF(1) - the catalytic core - and CF(0) - the membrane proton channel. CF(1) has five subunits: alpha(3), beta(3), gamma(1), delta(1), epsilon(1). CF(0) has three main subunits: a, b and c.

The protein resides in the cell inner membrane. Its function is as follows. Produces ATP from ADP in the presence of a proton gradient across the membrane. The gamma chain is believed to be important in regulating ATPase activity and the flow of protons through the CF(0) complex. This is ATP synthase gamma chain from Nautilia profundicola (strain ATCC BAA-1463 / DSM 18972 / AmH).